The following is a 429-amino-acid chain: Glucose-6-phosphate isomerase (429 aa).

Glutamate 282 (proton donor) is an active-site residue. Active-site residues include histidine 303 and lysine 418.

It belongs to the GPI family.

It is found in the cytoplasm. The catalysed reaction is alpha-D-glucose 6-phosphate = beta-D-fructose 6-phosphate. Its pathway is carbohydrate biosynthesis; gluconeogenesis. It participates in carbohydrate degradation; glycolysis; D-glyceraldehyde 3-phosphate and glycerone phosphate from D-glucose: step 2/4. In terms of biological role, catalyzes the reversible isomerization of glucose-6-phosphate to fructose-6-phosphate. This Mesomycoplasma hyopneumoniae (strain 232) (Mycoplasma hyopneumoniae) protein is Glucose-6-phosphate isomerase.